Here is a 122-residue protein sequence, read N- to C-terminus: Secretion system apparatus protein SsaM (122 aa).

This chain is Secretion system apparatus protein SsaM (ssaM), found in Salmonella typhimurium (strain LT2 / SGSC1412 / ATCC 700720).